A 308-amino-acid chain; its full sequence is Glutaminase (308 aa).

Residues Ser-68, Asn-118, Glu-162, Asn-169, Tyr-193, Tyr-244, and Val-262 each coordinate substrate.

The protein belongs to the glutaminase family. As to quaternary structure, homotetramer.

It catalyses the reaction L-glutamine + H2O = L-glutamate + NH4(+). The protein is Glutaminase of Hahella chejuensis (strain KCTC 2396).